Here is a 430-residue protein sequence, read N- to C-terminus: Ribosomal protein uS12 methylthiotransferase RimO (430 aa).

Residues 4–119 enclose the MTTase N-terminal domain; that stretch reads LKINFISLGC…IPVLFDIKPK (116 aa). [4Fe-4S] cluster-binding residues include cysteine 13, cysteine 49, cysteine 82, cysteine 141, cysteine 145, and cysteine 148. In terms of domain architecture, Radical SAM core spans 127 to 358; the sequence is STPKHTAYLK…SALQENITEQ (232 aa). The 70-residue stretch at 361 to 430 folds into the TRAM domain; sequence KSLIGKELDI…DKYDVVGEAE (70 aa).

It belongs to the methylthiotransferase family. RimO subfamily. [4Fe-4S] cluster is required as a cofactor.

The protein localises to the cytoplasm. It catalyses the reaction L-aspartate(89)-[ribosomal protein uS12]-hydrogen + (sulfur carrier)-SH + AH2 + 2 S-adenosyl-L-methionine = 3-methylsulfanyl-L-aspartate(89)-[ribosomal protein uS12]-hydrogen + (sulfur carrier)-H + 5'-deoxyadenosine + L-methionine + A + S-adenosyl-L-homocysteine + 2 H(+). In terms of biological role, catalyzes the methylthiolation of an aspartic acid residue of ribosomal protein uS12. This is Ribosomal protein uS12 methylthiotransferase RimO from Sulfurihydrogenibium sp. (strain YO3AOP1).